The primary structure comprises 205 residues: Ras-related protein rab-6.1 (205 aa).

Residues glycine 18–threonine 25, threonine 43, aspartate 66–glutamine 70, and asparagine 124–aspartate 127 each bind GTP. 2 S-geranylgeranyl cysteine lipidation sites follow: cysteine 203 and cysteine 205. The residue at position 205 (cysteine 205) is a Cysteine methyl ester.

Belongs to the small GTPase superfamily. Rab family. Interacts with GARP complex component vps-52. Highly expressed in body wall muscle, intestine, somatic gonad, distal tip cells, vulva, and neurons including AVB, AVD, RIG, and PVC (at protein level). Not expressed in AVA and RMDV neurons.

It localises to the cell membrane. It is found in the cell projection. Its subcellular location is the dendrite. The protein resides in the perikaryon. The protein localises to the golgi apparatus. It localises to the cytoplasmic vesicle. It is found in the secretory vesicle. In terms of biological role, the small GTPases Rab are key regulators of intracellular membrane trafficking, from the formation of transport vesicles to their fusion with membranes. Rabs cycle between an inactive GDP-bound form and an active GTP-bound form that is able to recruit to membranes different set of downstream effectors directly responsible for vesicle formation, movement, tethering and fusion. In its active GTP-bound form, acts redundantly with rab-6.2 (in its active GTP-bound form) to positively regulate the retrograde trafficking of cargo molecules from endosomes to Golgi structures. Required for the retrograde trafficking of glr-1, a subunit of AMPA-type glutamate receptors (AMPRs), out of early endosomes and into the Golgi compartment in neurons. Together with rab-6.2, promotes the retrograde trafficking of mig-14 from endosomes to Golgi structures in the intestine. In oocytes, in its active GTP-bound form, involved in the membrane fusion and exocytosis of secretory vesicles (cortical granules) to play a role in the remodeling of the embryo surface following fertilization. Recruits sep-1 to cortical granules (derived from the Golgi complex) for exocytosis during the oocyte-to-embryo transition. Required for seam cell division and alae formation. Promotes spontaneous reversals in locomotion. The protein is Ras-related protein rab-6.1 of Caenorhabditis elegans.